The chain runs to 122 residues: Histone H2B.2 (122 aa).

Residues 1–10 (MAPKKAPAAT) show a composition bias toward low complexity. The segment at 1–28 (MAPKKAPAATTEKKVKKAPTTEKKNKKK) is disordered. A N,N,N-trimethylalanine modification is found at Ala2. Residues Lys5 and Lys42 each carry the N6-acetyllysine modification. Residue Lys116 forms a Glycyl lysine isopeptide (Lys-Gly) (interchain with G-Cter in ubiquitin) linkage.

It belongs to the histone H2B family. In terms of assembly, the nucleosome is a histone octamer containing two molecules each of H2A, H2B, H3 and H4 assembled in one H3-H4 heterotetramer and two H2A-H2B heterodimers. The octamer wraps approximately 147 bp of DNA. Post-translationally, acetylation occurs almost exclusively in the MAC. In terms of processing, monoubiquitination to form H2BK115ub1 gives a specific tag for epigenetic transcriptional activation and is also prerequisite for H3K4me and H3K79me formation.

Its subcellular location is the nucleus. It is found in the chromosome. In terms of biological role, core component of nucleosome. Nucleosomes wrap and compact DNA into chromatin, limiting DNA accessibility to the cellular machineries which require DNA as a template. Histones thereby play a central role in transcription regulation, DNA repair, DNA replication and chromosomal stability. DNA accessibility is regulated via a complex set of post-translational modifications of histones, also called histone code, and nucleosome remodeling. The sequence is that of Histone H2B.2 (HTB2) from Tetrahymena thermophila (strain SB210).